Reading from the N-terminus, the 343-residue chain is Methionine import ATP-binding protein MetN (343 aa).

The region spanning 2–241 is the ABC transporter domain; sequence IKLSNITKVF…PKTPLAQKFI (240 aa). ATP is bound at residue 38-45; sequence GASGAGKS.

This sequence belongs to the ABC transporter superfamily. Methionine importer (TC 3.A.1.24) family. In terms of assembly, the complex is composed of two ATP-binding proteins (MetN), two transmembrane proteins (MetI) and a solute-binding protein (MetQ).

It is found in the cell inner membrane. The enzyme catalyses L-methionine(out) + ATP + H2O = L-methionine(in) + ADP + phosphate + H(+). It catalyses the reaction D-methionine(out) + ATP + H2O = D-methionine(in) + ADP + phosphate + H(+). Part of the ABC transporter complex MetNIQ involved in methionine import. Responsible for energy coupling to the transport system. This chain is Methionine import ATP-binding protein MetN, found in Escherichia coli O6:K15:H31 (strain 536 / UPEC).